We begin with the raw amino-acid sequence, 216 residues long: MEKFNVHTGVVAPLDRENVDTDAIIPKQFLKSIKRTGFGPNAFDEWRYLDHGEPGQDNSKRPLNPDFVLNQPRYQGASVLLARKNFGCGSSREHAPWALQQYGFRAIVAPSFADIFFNNCYKNGLLPIVLTEQQVDHLFNDTYAFNGYQLTIDLDAQVVRAPDGREYPFEITAFRKYCLLNGFDDIGLTLRHADKIRQFEAERLAKQPWLDNRLVG.

Belongs to the LeuD family. LeuD type 1 subfamily. As to quaternary structure, heterodimer of LeuC and LeuD.

The enzyme catalyses (2R,3S)-3-isopropylmalate = (2S)-2-isopropylmalate. Its pathway is amino-acid biosynthesis; L-leucine biosynthesis; L-leucine from 3-methyl-2-oxobutanoate: step 2/4. Catalyzes the isomerization between 2-isopropylmalate and 3-isopropylmalate, via the formation of 2-isopropylmaleate. The sequence is that of 3-isopropylmalate dehydratase small subunit from Burkholderia mallei (strain NCTC 10247).